We begin with the raw amino-acid sequence, 413 residues long: MAAALLARACGPVRGALWPRDCRRLHTIFQSVELPETYQMLRQTCRDFAEKELVPIAAQVDKEHRFPEAQVKKMGELGLMAMDVPEELSGAGLDYLAYTIAMEEISRGCASTGVIMSVNNFLYLGPILKFGSKEQKQQWITPFTSGDKVGCFALSEPGNGSDAGAAATTAQADHDSWVLSGTKAWITNAWEASAAVVFASTDRSLQNKGISAFLVPMPTAGLTLGKKEDKLGIRASSTANLIFEDCRIPKENLLGEPGMGFKIAMKTLDMGRIGIASKALGISQAALDCAVNYAENRRAFGVPLTKLQGIQFKLADMALALESARLLTWRAAMLKDNKKNPFIKEPAMAKLAASEAATAITHQAIQILGGMGYVTEMPAERHYRDARITEIYEGTSEIQRLVIAGHLLKSYRS.

A mitochondrion-targeting transit peptide spans 1-24; sequence MAAALLARACGPVRGALWPRDCRR. At T27 the chain carries Phosphothreonine. K51 is modified (N6-acetyllysine; alternate). K51 is modified (N6-succinyllysine; alternate). K72 bears the N6-acetyllysine mark. The residue at position 129 (K129) is an N6-acetyllysine; alternate. Position 129 is an N6-succinyllysine; alternate (K129). FAD contacts are provided by residues 152–161 and 185–187; these read FALSEPGNGS and WIT. S161 contributes to the substrate binding site. At K208 the chain carries N6-acetyllysine. At K262 the chain carries N6-acetyllysine; alternate. Position 262 is an N6-succinyllysine; alternate (K262). 269–272 contributes to the substrate binding site; the sequence is DMGR. Residue R297 coordinates FAD. K306 carries the N6-acetyllysine; alternate modification. At K306 the chain carries N6-succinyllysine; alternate. FAD is bound by residues Q308 and 366 to 370; that span reads QILGG. E393 serves as the catalytic Proton acceptor. G394 is a binding site for substrate. Residue 395 to 397 participates in FAD binding; the sequence is TSE.

Belongs to the acyl-CoA dehydrogenase family. In terms of assembly, homotetramer. FAD is required as a cofactor.

The protein resides in the mitochondrion matrix. The catalysed reaction is a short-chain 2,3-saturated fatty acyl-CoA + oxidized [electron-transfer flavoprotein] + H(+) = a short-chain (2E)-enoyl-CoA + reduced [electron-transfer flavoprotein]. The enzyme catalyses butanoyl-CoA + oxidized [electron-transfer flavoprotein] + H(+) = (2E)-butenoyl-CoA + reduced [electron-transfer flavoprotein]. It catalyses the reaction pentanoyl-CoA + oxidized [electron-transfer flavoprotein] + H(+) = (2E)-pentenoyl-CoA + reduced [electron-transfer flavoprotein]. It carries out the reaction hexanoyl-CoA + oxidized [electron-transfer flavoprotein] + H(+) = (2E)-hexenoyl-CoA + reduced [electron-transfer flavoprotein]. Its pathway is lipid metabolism; mitochondrial fatty acid beta-oxidation. Its function is as follows. Short-chain specific acyl-CoA dehydrogenase is one of the acyl-CoA dehydrogenases that catalyze the first step of mitochondrial fatty acid beta-oxidation, an aerobic process breaking down fatty acids into acetyl-CoA and allowing the production of energy from fats. The first step of fatty acid beta-oxidation consists in the removal of one hydrogen from C-2 and C-3 of the straight-chain fatty acyl-CoA thioester, resulting in the formation of trans-2-enoyl-CoA. Among the different mitochondrial acyl-CoA dehydrogenases, short-chain specific acyl-CoA dehydrogenase acts specifically on acyl-CoAs with saturated 4 to 6 carbons long primary chains. This Sus scrofa (Pig) protein is Short-chain specific acyl-CoA dehydrogenase, mitochondrial (ACADS).